Reading from the N-terminus, the 268-residue chain is Tryptophan synthase alpha chain (268 aa).

Active-site proton acceptor residues include glutamate 49 and aspartate 60.

The protein belongs to the TrpA family. In terms of assembly, tetramer of two alpha and two beta chains.

It catalyses the reaction (1S,2R)-1-C-(indol-3-yl)glycerol 3-phosphate + L-serine = D-glyceraldehyde 3-phosphate + L-tryptophan + H2O. It functions in the pathway amino-acid biosynthesis; L-tryptophan biosynthesis; L-tryptophan from chorismate: step 5/5. In terms of biological role, the alpha subunit is responsible for the aldol cleavage of indoleglycerol phosphate to indole and glyceraldehyde 3-phosphate. The protein is Tryptophan synthase alpha chain of Salmonella paratyphi A (strain ATCC 9150 / SARB42).